Reading from the N-terminus, the 95-residue chain is Large ribosomal subunit protein bL28 (95 aa).

This sequence belongs to the bacterial ribosomal protein bL28 family.

This Zymomonas mobilis subsp. mobilis (strain ATCC 31821 / ZM4 / CP4) protein is Large ribosomal subunit protein bL28.